A 379-amino-acid chain; its full sequence is Chaperone protein DnaJ (379 aa).

The J domain maps to 5–70 (DYYEVLGVEK…QKRAAYDQYG (66 aa)). The CR-type zinc finger occupies 133-211 (GKSVEIRVPT…CHGQGRVEKT (79 aa)). Zn(2+) contacts are provided by cysteine 146, cysteine 149, cysteine 163, cysteine 166, cysteine 185, cysteine 188, cysteine 199, and cysteine 202. CXXCXGXG motif repeat units follow at residues 146–153 (CDTCDGSG), 163–170 (CTTCHGQG), 185–192 (CPTCGGKG), and 199–206 (CDVCHGQG).

Belongs to the DnaJ family. Homodimer. Requires Zn(2+) as cofactor.

The protein resides in the cytoplasm. Functionally, participates actively in the response to hyperosmotic and heat shock by preventing the aggregation of stress-denatured proteins and by disaggregating proteins, also in an autonomous, DnaK-independent fashion. Unfolded proteins bind initially to DnaJ; upon interaction with the DnaJ-bound protein, DnaK hydrolyzes its bound ATP, resulting in the formation of a stable complex. GrpE releases ADP from DnaK; ATP binding to DnaK triggers the release of the substrate protein, thus completing the reaction cycle. Several rounds of ATP-dependent interactions between DnaJ, DnaK and GrpE are required for fully efficient folding. Also involved, together with DnaK and GrpE, in the DNA replication of plasmids through activation of initiation proteins. This is Chaperone protein DnaJ from Pseudoalteromonas atlantica (strain T6c / ATCC BAA-1087).